The sequence spans 580 residues: TRAF-type zinc finger domain-containing protein 1 (580 aa).

N-acetylalanine is present on A2. The TRAF-type zinc-finger motif lies at 27 to 103 (IHEIHCQRNI…DLELSVVKLK (77 aa)). Phosphoserine is present on residues S278, S320, S326, S327, S409, S415, S430, S450, S469, and S532. 3 disordered regions span residues 395–453 (TANH…SPNR), 468–509 (PSGP…ASGH), and 524–580 (FAPS…EEEE). The span at 407–417 (QDSQPENTSAE) shows a compositional bias: polar residues.

In terms of assembly, interacts with MAVS, TICAM1, TRAF1, TRAF2, TRAF3 and TRAF6. In terms of tissue distribution, expressed in skeletal muscle, brain, liver, kidney, spleen and bone marrow. Expression depends on STAT1.

Its function is as follows. Negative feedback regulator that controls excessive innate immune responses. Regulates both Toll-like receptor 4 (TLR4) and DDX58/RIG1-like helicases (RLH) pathways. May inhibit the LTR pathway by direct interaction with TRAF6 and attenuation of NF-kappa-B activation. May negatively regulate the RLH pathway downstream from MAVS and upstream of NF-kappa-B and IRF3. The chain is TRAF-type zinc finger domain-containing protein 1 (Trafd1) from Mus musculus (Mouse).